Consider the following 508-residue polypeptide: Steroid 17-alpha-hydroxylase/17,20 lyase (508 aa).

Residue asparagine 202 coordinates substrate. Residue cysteine 442 coordinates heme.

The protein belongs to the cytochrome P450 family. Heme is required as a cofactor.

It is found in the endoplasmic reticulum membrane. The protein resides in the microsome membrane. The enzyme catalyses a C21-steroid + reduced [NADPH--hemoprotein reductase] + O2 = a 17alpha-hydroxy-C21-steroid + oxidized [NADPH--hemoprotein reductase] + H2O + H(+). It carries out the reaction progesterone + reduced [NADPH--hemoprotein reductase] + O2 = 17alpha-hydroxyprogesterone + oxidized [NADPH--hemoprotein reductase] + H2O + H(+). It catalyses the reaction pregnenolone + reduced [NADPH--hemoprotein reductase] + O2 = 17alpha-hydroxypregnenolone + oxidized [NADPH--hemoprotein reductase] + H2O + H(+). The catalysed reaction is 17alpha-hydroxyprogesterone + reduced [NADPH--hemoprotein reductase] + O2 = androst-4-ene-3,17-dione + acetate + oxidized [NADPH--hemoprotein reductase] + H2O + 2 H(+). The enzyme catalyses 17alpha-hydroxyprogesterone + reduced [NADPH--hemoprotein reductase] + O2 = 16alpha,17alpha-dihydroxyprogesterone + oxidized [NADPH--hemoprotein reductase] + H2O + H(+). It carries out the reaction 16alpha,17alpha-dihydroxyprogesterone + reduced [NADPH--hemoprotein reductase] + O2 = 6beta,16alpha,17alpha-trihydroxyprogesterone + oxidized [NADPH--hemoprotein reductase] + H2O + H(+). It catalyses the reaction 17alpha-hydroxypregnenolone + reduced [NADPH--hemoprotein reductase] + O2 = 3beta-hydroxyandrost-5-en-17-one + acetate + oxidized [NADPH--hemoprotein reductase] + H2O + 2 H(+). The catalysed reaction is 16alpha,17alpha-dihydroxypregnenolone + reduced [NADPH--hemoprotein reductase] + O2 = 3beta,16alpha-dihydroxy-androst-5-en-17-one + acetate + oxidized [NADPH--hemoprotein reductase] + H2O + 2 H(+). The enzyme catalyses 3beta-hydroxyandrost-5-en-17-one + reduced [NADPH--hemoprotein reductase] + O2 = 3beta,16alpha-dihydroxy-androst-5-en-17-one + oxidized [NADPH--hemoprotein reductase] + H2O + H(+). It carries out the reaction androst-4-ene-3,17-dione + reduced [NADPH--hemoprotein reductase] + O2 = 16alpha-hydroxyandrost-4-ene-3,17-dione + oxidized [NADPH--hemoprotein reductase] + H2O + H(+). It participates in steroid hormone biosynthesis. It functions in the pathway steroid biosynthesis; glucocorticoid biosynthesis. Its activity is regulated as follows. Regulated predominantly by intracellular cAMP levels. The 17,20-lyase activity is stimulated by cytochrome b5, which acts as an allosteric effector increasing the Vmax of the lyase activity. Its function is as follows. A cytochrome P450 monooxygenase involved in corticoid and androgen biosynthesis. Catalyzes 17-alpha hydroxylation of C21 steroids, which is common for both pathways. A second oxidative step, required only for androgen synthesis, involves an acyl-carbon cleavage. The 17-alpha hydroxy intermediates, as part of adrenal glucocorticoids biosynthesis pathway, are precursors of cortisol. Hydroxylates steroid hormones, pregnenolone and progesterone to form 17-alpha hydroxy metabolites, followed by the cleavage of the C17-C20 bond to form C19 steroids, dehydroepiandrosterone (DHEA) and androstenedione. Has 16-alpha hydroxylase activity. Catalyzes 16-alpha hydroxylation of 17-alpha hydroxy pregnenolone, followed by the cleavage of the C17-C20 bond to form 16-alpha-hydroxy DHEA. Also 16-alpha hydroxylates androgens, relevant for estriol synthesis. Mechanistically, uses molecular oxygen inserting one oxygen atom into a substrate, and reducing the second into a water molecule, with two electrons provided by NADPH via cytochrome P450 reductase (CPR; NADPH-ferrihemoprotein reductase). The protein is Steroid 17-alpha-hydroxylase/17,20 lyase (CYP17A1) of Felis catus (Cat).